The chain runs to 523 residues: 2-isopropylmalate synthase (523 aa).

The Pyruvate carboxyltransferase domain maps to 5–267; that stretch reads VIIFDTTLRD…HTAINHQEIW (263 aa). Mn(2+) contacts are provided by D14, H202, H204, and N238. Positions 392–523 are regulatory domain; the sequence is RLDYFSVQSS…QHNENNKETV (132 aa).

It belongs to the alpha-IPM synthase/homocitrate synthase family. LeuA type 1 subfamily. Homodimer. Mn(2+) serves as cofactor.

The protein localises to the cytoplasm. The catalysed reaction is 3-methyl-2-oxobutanoate + acetyl-CoA + H2O = (2S)-2-isopropylmalate + CoA + H(+). Its pathway is amino-acid biosynthesis; L-leucine biosynthesis; L-leucine from 3-methyl-2-oxobutanoate: step 1/4. Functionally, catalyzes the condensation of the acetyl group of acetyl-CoA with 3-methyl-2-oxobutanoate (2-ketoisovalerate) to form 3-carboxy-3-hydroxy-4-methylpentanoate (2-isopropylmalate). The protein is 2-isopropylmalate synthase of Shigella dysenteriae serotype 1 (strain Sd197).